The following is a 1118-amino-acid chain: cGMP-specific 3',5'-cyclic phosphodiesterase (1118 aa).

A disordered region spans residues 1-142; sequence MTDVSSPAGG…KASTTASQQD (142 aa). Residues 18–33 are compositionally biased toward low complexity; it reads STTSSSSAATTSASSS. Residues 34-45 show a composition bias toward polar residues; it reads KPLTNGANKTAI. Composition is skewed to low complexity over residues 46 to 56 and 63 to 72; these read STAAGGVTPGA and GAIPASSSSG. Polar residues predominate over residues 84 to 101; the sequence is SNNNRPAVTNRSSETKLM. Positions 102–128 are enriched in low complexity; that stretch reads TPTGSSSSPSQSPSQTQASIQTQTSQQ. 2 GAF domains span residues 247-399 and 431-612; these read DIDV…GIGI and NLEC…GLGI. In terms of domain architecture, PDEase spans 642–965; it reads SQDQTEKLTQ…RNWQDLAEKV (324 aa). The active-site Proton donor is H718. A divalent metal cation-binding residues include H722, H758, D759, and D869. Disordered regions lie at residues 1006-1035 and 1065-1118; these read QQSQ…TGAL and SHVS…CALL. 2 stretches are compositionally biased toward basic and acidic residues: residues 1011–1022 and 1065–1075; these read GSEDSHTPEHQR and SHVSEDMDDKS. Residues 1084–1104 are compositionally biased toward low complexity; it reads ASGSMGRMSASSSTSSAGGQM. Residues 1108–1118 show a composition bias toward basic residues; that stretch reads SKKRSKLCALL. Cysteine methyl ester is present on C1115. Residue C1115 is the site of S-farnesyl cysteine attachment. Residues 1116–1118 constitute a propeptide, removed in mature form; that stretch reads ALL.

The protein belongs to the cyclic nucleotide phosphodiesterase family. In terms of assembly, interacts with PrBP. It depends on a divalent metal cation as a cofactor. As to expression, expressed in Malpighian tubule principal cells. Also expressed in adult head.

It localises to the cell membrane. The enzyme catalyses 3',5'-cyclic GMP + H2O = GMP + H(+). Inhibited by sildenafil and zaprinast. Hydrolyzes the second messenger cGMP, which is a key regulator of many important physiological processes. Has cAMP phosphodiesterase activity in vitro but not in vivo. Has a role regulating cGMP transport in Malpighian tubule principal cells. This Drosophila melanogaster (Fruit fly) protein is cGMP-specific 3',5'-cyclic phosphodiesterase (Pde6).